The primary structure comprises 634 residues: Phosphatase and actin regulator 2 (634 aa).

Disordered stretches follow at residues 1–32, 84–344, 412–471, and 485–508; these read MDNA…KRKG, LPDQ…PLED, PQLL…ALAS, and NRPS…ERQE. Asp-2 carries the N-myristoyl glycine lipid modification. Positions 13-26 are enriched in polar residues; sequence IANSDGPTAGSQTP. Phosphoserine is present on Ser-16. Position 25 is a phosphothreonine (Thr-25). The RPEL 1 repeat unit spans residues 60–85; sequence AVLERKISTRQSREELIRRGVLKELP. Basic and acidic residues-rich tracts occupy residues 108–120 and 137–147; these read ESTR…KSEE and EDKKENTENHS. Residues 153–162 are compositionally biased toward pro residues; the sequence is PALPPSAPPK. 2 stretches are compositionally biased toward low complexity: residues 231 to 247 and 276 to 290; these read GSKA…SSRP and TSHL…GTSD. Basic and acidic residues predominate over residues 291–304; sequence LKGEPAETRVESFK. Residues 324-341 show a composition bias toward pro residues; that stretch reads VPPPPVAPAPSPLAPPLP. The residue at position 423 (Ser-423) is a Phosphoserine. Residues 452–464 show a composition bias toward acidic residues; the sequence is TDDEDEDEDEDGS. RPEL repeat units lie at residues 477-502, 515-540, and 553-578; these read DTLA…QRTS, TKLV…KQKN, and RRLS…RFNE. Basic and acidic residues predominate over residues 488–508; the sequence is SKKELEDKNILQRTSEEERQE. A phosphoserine mark is found at Ser-522 and Ser-560.

It belongs to the phosphatase and actin regulator family. As to quaternary structure, binds PPP1CA and actin.

It localises to the membrane. The protein is Phosphatase and actin regulator 2 (PHACTR2) of Homo sapiens (Human).